The following is a 121-amino-acid chain: Basic phospholipase A2 CoaTx-II (121 aa).

Disulfide bonds link Cys26-Cys115, Cys28-Cys44, Cys43-Cys95, Cys49-Cys121, Cys50-Cys88, Cys57-Cys81, and Cys75-Cys86. An important for membrane-damaging activities in eukaryotes and bacteria; heparin-binding region spans residues 105 to 117 (KKYRIYPKFLCKK).

The protein belongs to the phospholipase A2 family. Group II subfamily. K49 sub-subfamily. As to quaternary structure, homodimer; non-covalently-linked. As to expression, expressed by the venom gland.

It is found in the secreted. Functionally, snake venom phospholipase A2 (PLA2) that lacks enzymatic inactivity. It shows antibacterial activity against both Gram-negative and Gram-positive bacteria, including methicillin-resistant strains. In vivo, it causes local muscular damage, but no systemic damage (intravenous administration does not elevate plasma creatine kinase). Also causes an inflammatory activity that is demonstrated by mice paw edema induction and pro-inflammatory cytokine IL-6 elevation. A model of myotoxic mechanism has been proposed: an apo Lys49-PLA2 is activated by the entrance of a hydrophobic molecule (e.g. fatty acid) at the hydrophobic channel of the protein leading to a reorientation of a monomer. This reorientation causes a transition between 'inactive' to 'active' states, causing alignment of C-terminal and membrane-docking sites (MDoS) side-by-side and putting the membrane-disruption sites (MDiS) in the same plane, exposed to solvent and in a symmetric position for both monomers. The MDoS region stabilizes the toxin on membrane by the interaction of charged residues with phospholipid head groups. Subsequently, the MDiS region destabilizes the membrane with penetration of hydrophobic residues. This insertion causes a disorganization of the membrane, allowing an uncontrolled influx of ions (i.e. calcium and sodium), and eventually triggering irreversible intracellular alterations and cell death. The polypeptide is Basic phospholipase A2 CoaTx-II (Crotalus lutosus abyssus (Grand Canyon rattlesnake)).